A 266-amino-acid polypeptide reads, in one-letter code: NAD kinase 1 (266 aa).

The Proton acceptor role is filled by Asp45. Residues 45–46 (DG), 122–123 (NE), and Arg148 each bind NAD(+). Asp150 contacts ATP. NAD(+) is bound by residues Ser158 and 161–166 (TAYNKA).

Belongs to the NAD kinase family. Homodimer. The cofactor is Ca(2+). Mn(2+) serves as cofactor.

It localises to the cytoplasm. The enzyme catalyses NAD(+) + ATP = ADP + NADP(+) + H(+). Its activity is regulated as follows. Allosterically inhibited by NADP and activated by quinolinic acid. Strongly inhibited by HgCl(2). Functionally, involved in the regulation of the intracellular balance of NAD and NADP, and is a key enzyme in the biosynthesis of NADP. Catalyzes specifically the phosphorylation on 2'-hydroxyl of the adenosine moiety of NAD to yield NADP. It can use ATP and other nucleoside triphosphates (GTP, UTP) as well as inorganic polyphosphate (poly(P)) as a source of phosphorus. The chain is NAD kinase 1 (ppnKA) from Bacillus subtilis (strain 168).